Here is a 387-residue protein sequence, read N- to C-terminus: 3-ketoacyl-CoA thiolase (387 aa).

Cys91 serves as the catalytic Acyl-thioester intermediate. Active-site proton acceptor residues include His343 and Cys373.

Belongs to the thiolase-like superfamily. Thiolase family. Heterotetramer of two alpha chains (FadB) and two beta chains (FadA).

It localises to the cytoplasm. The catalysed reaction is an acyl-CoA + acetyl-CoA = a 3-oxoacyl-CoA + CoA. It functions in the pathway lipid metabolism; fatty acid beta-oxidation. In terms of biological role, catalyzes the final step of fatty acid oxidation in which acetyl-CoA is released and the CoA ester of a fatty acid two carbons shorter is formed. The polypeptide is 3-ketoacyl-CoA thiolase (Shigella boydii serotype 4 (strain Sb227)).